A 181-amino-acid chain; its full sequence is uncharacterized protein (181 aa).

It to M.pneumoniae MPN_635 C-terminal region.

This is an uncharacterized protein from Mycoplasma pneumoniae (strain ATCC 29342 / M129 / Subtype 1) (Mycoplasmoides pneumoniae).